A 522-amino-acid chain; its full sequence is Lysine--tRNA ligase (522 aa).

Positions 44 to 52 (PSGLPHIGT) match the 'HIGH' region motif. The 'KMSKS' region signature appears at 290–294 (KISKS). Residue Lys293 coordinates ATP.

Belongs to the class-I aminoacyl-tRNA synthetase family.

Its subcellular location is the cytoplasm. It catalyses the reaction tRNA(Lys) + L-lysine + ATP = L-lysyl-tRNA(Lys) + AMP + diphosphate. The polypeptide is Lysine--tRNA ligase (Rickettsia peacockii (strain Rustic)).